Reading from the N-terminus, the 1582-residue chain is Hybrid PKS-NRPS synthetase TAS1 (1582 aa).

The segment at 33–387 (IPLSKVQEVL…GEDTAAASRV (355 aa)) is condensation (C) domain. Positions 499–892 (RSRAATQPDE…KLHILGRMNN (394 aa)) are adenylation (A) domain. A Carrier domain is found at 1015–1092 (NLVDRLEASI…RQAQRLSELV (78 aa)). Residues 1127–1574 (APLFAIVGMA…GVNAHCILAS (448 aa)) form the Ketosynthase family 3 (KS3) domain. Catalysis depends on for beta-ketoacyl synthase activity residues Cys-1294 and His-1432. Residues 1460–1485 (ESRCSSGAISPTGTEQQPSDTKQTPR) are disordered. The span at 1462–1485 (RCSSGAISPTGTEQQPSDTKQTPR) shows a compositional bias: polar residues. The active-site For beta-ketoacyl synthase activity is the Asn-1498.

This sequence in the N-terminal section; belongs to the NRP synthetase family. It depends on pantetheine 4'-phosphate as a cofactor.

It catalyses the reaction acetoacetyl-CoA + L-isoleucine + ATP = tenuazonic acid + AMP + diphosphate + CoA + 2 H(+). Its function is as follows. Hybrid PKS-NRPS synthetase that mediates the biosynthesis of the toxin tenuazonic acid (TeA), an inhibitor of protein biosynthesis on ribosomes by suppressing the release of new protein. TAS1 alone is sufficient for TeA synthesis via the condensation of isoleucine (Ile) with acetoacetyl-CoA by the N-terminal NRPS module and subsequent cyclization conducted by the C-terminal KS domain. This is Hybrid PKS-NRPS synthetase TAS1 from Cordyceps militaris (strain CM01) (Caterpillar fungus).